Consider the following 80-residue polypeptide: Exodeoxyribonuclease 7 small subunit (80 aa).

This sequence belongs to the XseB family. As to quaternary structure, heterooligomer composed of large and small subunits.

The protein resides in the cytoplasm. It carries out the reaction Exonucleolytic cleavage in either 5'- to 3'- or 3'- to 5'-direction to yield nucleoside 5'-phosphates.. Bidirectionally degrades single-stranded DNA into large acid-insoluble oligonucleotides, which are then degraded further into small acid-soluble oligonucleotides. This chain is Exodeoxyribonuclease 7 small subunit, found in Salmonella paratyphi B (strain ATCC BAA-1250 / SPB7).